The sequence spans 931 residues: Netrin receptor UNC5C (931 aa).

Residues 1–40 (MRKGLRATAARCGLGLGYLLQMLVLPALALLSASGTGSAA) form the signal peptide. Residues 41 to 380 (QDDDFFHELP…APDSDDVALY (340 aa)) are Extracellular-facing. The Ig-like domain maps to 62-159 (PHFLIEPEEA…AGTTKSRKAY (98 aa)). 9 disulfide bridges follow: C83/C144, C95/C142, C188/C239, C272/C309, C276/C313, C287/C299, C328/C362, C332/C367, and C340/C352. The Ig-like C2-type domain maps to 161–256 (RIAYLRKTFE…KRKSTTATVI (96 aa)). Residue N236 is glycosylated (N-linked (GlcNAc...) asparagine). TSP type-1 domains lie at 260-314 (NGGW…TLCP) and 316-368 (DGRW…GLCM). The N-linked (GlcNAc...) asparagine glycan is linked to N361. A helical membrane pass occupies residues 381–401 (VGIVIAVTVCLAITVVVALFV). The Cytoplasmic portion of the chain corresponds to 402–931 (YRKNHRDFES…VVSLAAEGQY (530 aa)). The required for netrin-mediated axon repulsion of neuronal growth cones stretch occupies residues 402–931 (YRKNHRDFES…VVSLAAEGQY (530 aa)). A Phosphoserine modification is found at S502. The ZU5 domain occupies 530-673 (CTAFGTFNSL…LSTYALVGQS (144 aa)). Y568 carries the post-translational modification Phosphotyrosine. The segment at 694–712 (SLEYSIRVYCLDDTQDALK) is interaction with DCC. The Death domain occupies 850 to 929 (QKLCSSLDAP…ETVVSLAAEG (80 aa)).

It belongs to the unc-5 family. Interacts with DCC (via cytoplasmic domain). Interacts (tyrosine phosphorylated form) with PTPN11. Interacts (via extracellular domain) with FLRT3 (via extracellular domain). Interacts (via Ig-like C2-type domain) with DSCAM (via extracellular domain). Interacts (via death domain) with DAPK1. Interacts (via cytoplasmic domain) with TUBB3; this interaction is decreased by NTN1/Netrin-1. Post-translationally, proteolytically cleaved by caspases during apoptosis. The cleavage does not take place when the receptor is associated with netrin ligand. Its cleavage by caspases is required to induce apoptosis. In terms of processing, phosphorylated on different cytoplasmic tyrosine residues. Phosphorylation of Tyr-568 leads to an interaction with PTPN11 phosphatase, suggesting that its activity is regulated by phosphorylation/dephosphorylation. Tyrosine phosphorylation is netrin-dependent. In terms of tissue distribution, detected in brain (at protein level). Mainly expressed in brain. Also expressed in kidney. Not expressed in developing or adult lung.

It is found in the cell membrane. Its subcellular location is the cell surface. The protein localises to the synapse. The protein resides in the synaptosome. It localises to the cell projection. It is found in the axon. Its subcellular location is the dendrite. The protein localises to the growth cone. The protein resides in the lamellipodium. It localises to the filopodium. In terms of biological role, receptor for netrin required for axon guidance. Mediates axon repulsion of neuronal growth cones in the developing nervous system upon ligand binding. NTN1/Netrin-1 binding might cause dissociation of UNC5C from polymerized TUBB3 in microtubules and thereby lead to increased microtubule dynamics and axon repulsion. Axon repulsion in growth cones may also be caused by its association with DCC that may trigger signaling for repulsion. Might also collaborate with DSCAM in NTN1-mediated axon repulsion independently of DCC. Also involved in corticospinal tract axon guidance independently of DCC. Involved in dorsal root ganglion axon projection towards the spinal cord. It also acts as a dependence receptor required for apoptosis induction when not associated with netrin ligand. In Rattus norvegicus (Rat), this protein is Netrin receptor UNC5C (Unc5c).